Consider the following 120-residue polypeptide: Large ribosomal subunit protein uL24 (120 aa).

It belongs to the universal ribosomal protein uL24 family. As to quaternary structure, part of the 50S ribosomal subunit.

Its function is as follows. One of two assembly initiator proteins, it binds directly to the 5'-end of the 23S rRNA, where it nucleates assembly of the 50S subunit. One of the proteins that surrounds the polypeptide exit tunnel on the outside of the subunit. The polypeptide is Large ribosomal subunit protein uL24 (Pseudarthrobacter chlorophenolicus (strain ATCC 700700 / DSM 12829 / CIP 107037 / JCM 12360 / KCTC 9906 / NCIMB 13794 / A6) (Arthrobacter chlorophenolicus)).